We begin with the raw amino-acid sequence, 548 residues long: Chaperonin GroEL (548 aa).

ATP contacts are provided by residues Thr30–Pro33, Lys51, Asp87–Thr91, Gly415, and Asn479–Val481.

Belongs to the chaperonin (HSP60) family. In terms of assembly, forms a cylinder of 14 subunits composed of two heptameric rings stacked back-to-back. Interacts with the co-chaperonin GroES.

It is found in the cytoplasm. The catalysed reaction is ATP + H2O + a folded polypeptide = ADP + phosphate + an unfolded polypeptide.. Its function is as follows. Together with its co-chaperonin GroES, plays an essential role in assisting protein folding. The GroEL-GroES system forms a nano-cage that allows encapsulation of the non-native substrate proteins and provides a physical environment optimized to promote and accelerate protein folding. The polypeptide is Chaperonin GroEL (Stenotrophomonas maltophilia (Pseudomonas maltophilia)).